We begin with the raw amino-acid sequence, 477 residues long: E3 ubiquitin-protein ligase TRIM17 (477 aa).

The RING-type zinc finger occupies 16–66 (CSICLDYFTDPVMTACGHNFCRECIQMSWEKGKGKKGKKKQKGSFPCPECR). Residues 94–135 (HKRDLCQIHQEPLKLFCQDDQTPICVVCREAQEHRMHRVLPL) form a B box-type zinc finger. The Zn(2+) site is built by Cys99, His102, Cys121, and His127. Residues 135–225 (LDEAAREYKL…GKLQDSKASL (91 aa)) are a coiled coil. In terms of domain architecture, B30.2/SPRY spans 276–475 (AIKTVCRVPG…MVISTVTMWV (200 aa)).

This sequence belongs to the TRIM/RBCC family. Interacts (via coiled coil) with TRIM44 (via coiled coil). Interacts with TRIM28; this interaction prevents TRIM28 activity on BCL2A1. Interacts with TRIM41; this interaction prevents TRIM41 activity on ZSCAN2. Interacts with BECN1. Interacts with NFATC3 and NFATC4; these interactions prevent NFATC3 and NFATC4 nuclear localization. Auto-ubiquitinated. In terms of tissue distribution, expressed almost exclusively in the testis.

The protein localises to the cytoplasm. Its subcellular location is the lysosome. It carries out the reaction S-ubiquitinyl-[E2 ubiquitin-conjugating enzyme]-L-cysteine + [acceptor protein]-L-lysine = [E2 ubiquitin-conjugating enzyme]-L-cysteine + N(6)-ubiquitinyl-[acceptor protein]-L-lysine.. The protein operates within protein modification; protein ubiquitination. Functionally, E3 ubiquitin ligase that plays important roles in the regulation of neuronal apoptosis, selective autophagy or cell proliferation. Stimulates the degradation of kinetochore ZW10 interacting protein ZWINT in a proteasome-dependent manner, leading to negative regulation of cell proliferation. Inhibits autophagic degradation of diverse known targets while contributing to autophagy of midbodies. Autophagy-inhibitory activity involves MCL1, which TRIM17 assembles into complexes with the key autophagy regulator BECN1. Controls neuronal apoptosis by mediating ubiquitination and degradation of MCL1 to initiate neuronal death. In addition, regulates NFAT transcription factors NFATC3 and NFATC4 activities by preventing their nuclear localization, thus inhibiting their transcriptional activities. Decreases TRIM41-mediated degradation of ZSCAN2 thereby stimulating alpha-synuclein/SNCA transcription in neuronal cells. Prevents the E3 ubiquitin-ligase activity of TRIM28 and its interaction with anti-apoptotic BCL2A1, blocking TRIM28 from ubiquitinating BCL2A1. This Rattus norvegicus (Rat) protein is E3 ubiquitin-protein ligase TRIM17 (Trim17).